The following is a 300-amino-acid chain: Geranylgeranyl pyrophosphate synthase (300 aa).

Position 1 is an N-acetylmethionine (methionine 1). 3 residues coordinate isopentenyl diphosphate: lysine 25, arginine 28, and histidine 57. Residues aspartate 64 and aspartate 68 each contribute to the Mg(2+) site. Arginine 73 provides a ligand contact to dimethylallyl diphosphate. Position 74 (arginine 74) interacts with isopentenyl diphosphate. Dimethylallyl diphosphate-binding residues include lysine 151, threonine 152, glutamine 185, lysine 202, and lysine 212.

Belongs to the FPP/GGPP synthase family. In terms of assembly, homohexamer; trimer of homodimers. Requires Mg(2+) as cofactor.

It is found in the cytoplasm. The protein localises to the perinuclear region. It localises to the myofibril. The protein resides in the sarcomere. Its subcellular location is the z line. The enzyme catalyses isopentenyl diphosphate + dimethylallyl diphosphate = (2E)-geranyl diphosphate + diphosphate. The catalysed reaction is isopentenyl diphosphate + (2E)-geranyl diphosphate = (2E,6E)-farnesyl diphosphate + diphosphate. It carries out the reaction isopentenyl diphosphate + (2E,6E)-farnesyl diphosphate = (2E,6E,10E)-geranylgeranyl diphosphate + diphosphate. It functions in the pathway isoprenoid biosynthesis; farnesyl diphosphate biosynthesis; farnesyl diphosphate from geranyl diphosphate and isopentenyl diphosphate: step 1/1. It participates in isoprenoid biosynthesis; geranyl diphosphate biosynthesis; geranyl diphosphate from dimethylallyl diphosphate and isopentenyl diphosphate: step 1/1. The protein operates within isoprenoid biosynthesis; geranylgeranyl diphosphate biosynthesis; geranylgeranyl diphosphate from farnesyl diphosphate and isopentenyl diphosphate: step 1/1. Its function is as follows. Catalyzes the trans-addition of the three molecules of isopentenyl diphosphate (IPP) onto dimethylallyl pyrophosphate (DMAPP) to form geranylgeranyl pyrophosphate, an important precursor of carotenoids and geranylated proteins. The chain is Geranylgeranyl pyrophosphate synthase from Mus musculus (Mouse).